We begin with the raw amino-acid sequence, 176 residues long: ATP-dependent protease subunit HslV (176 aa).

Residue Thr-2 is part of the active site. The Na(+) site is built by Gly-157, Cys-160, and Thr-163.

It belongs to the peptidase T1B family. HslV subfamily. A double ring-shaped homohexamer of HslV is capped on each side by a ring-shaped HslU homohexamer. The assembly of the HslU/HslV complex is dependent on binding of ATP.

It localises to the cytoplasm. It catalyses the reaction ATP-dependent cleavage of peptide bonds with broad specificity.. With respect to regulation, allosterically activated by HslU binding. Protease subunit of a proteasome-like degradation complex believed to be a general protein degrading machinery. The protein is ATP-dependent protease subunit HslV of Photorhabdus laumondii subsp. laumondii (strain DSM 15139 / CIP 105565 / TT01) (Photorhabdus luminescens subsp. laumondii).